The primary structure comprises 579 residues: SLAIN motif-containing protein 1 (579 aa).

6 disordered regions span residues Met1–Pro21, Leu60–Ala95, Gly135–Leu162, Tyr233–Asp258, Ser289–Asp313, and Ile347–Ile454. Positions Ala9–Pro21 are enriched in low complexity. Positions Pro21–Ala56 form a coiled coil. The segment covering Gln63 to Ala73 has biased composition (pro residues). Low complexity predominate over residues Glu141–Thr154. Positions Tyr233 to Gln243 are enriched in polar residues. The residue at position 241 (Ser241) is a Phosphoserine. Composition is skewed to low complexity over residues Ser244–Ser253 and Ser289–Ser305. A compositionally biased stretch (polar residues) spans Ser362–Phe373. Over residues Gln374–Pro390 the composition is skewed to low complexity. Positions Ala412–Ser432 are enriched in polar residues. Arg469 carries the post-translational modification Asymmetric dimethylarginine. Positions Ser479–Pro516 are disordered. The segment covering Pro502–Pro516 has biased composition (polar residues). At Arg554 the chain carries Asymmetric dimethylarginine.

The protein belongs to the SLAIN motif-containing family. Interacts with MAPRE1, MAPRE2, MAPRE3 and CKAP5. Interacts with ZDHHC17 (via ANK repeats). Expressed in embryonic stem cells. Expressed in adult bone marrow, brain, kidney, lung, testis and thymus. Expressed in colon. Isoform 1 is highly expressed in brain. Isoform 2 is more widely expressed in bone marrow, brain, colon, kidney, lung and thymus.

It is found in the cytoplasm. Its subcellular location is the cytoskeleton. Microtubule plus-end tracking protein that might be involved in the regulation of cytoplasmic microtubule dynamics, microtubule organization and microtubule elongation. The protein is SLAIN motif-containing protein 1 (Slain1) of Mus musculus (Mouse).